We begin with the raw amino-acid sequence, 238 residues long: Probable transcriptional regulatory protein SSP2054 (238 aa).

It belongs to the TACO1 family. YeeN subfamily.

It is found in the cytoplasm. This Staphylococcus saprophyticus subsp. saprophyticus (strain ATCC 15305 / DSM 20229 / NCIMB 8711 / NCTC 7292 / S-41) protein is Probable transcriptional regulatory protein SSP2054.